A 326-amino-acid chain; its full sequence is Flotillin-like protein FloA (326 aa).

2 helical membrane passes run 6 to 26 and 27 to 47; these read IILF…GSSV and SLWI…IVFM.

It belongs to the flotillin-like FloA family. Homooligomerizes.

The protein localises to the cell membrane. It localises to the membrane raft. Functionally, found in functional membrane microdomains (FMM) that may be equivalent to eukaryotic membrane rafts. FMMs are highly dynamic and increase in number as cells age. Flotillins are thought to be important factors in membrane fluidity. This is Flotillin-like protein FloA from Desulfosudis oleivorans (strain DSM 6200 / JCM 39069 / Hxd3) (Desulfococcus oleovorans).